The sequence spans 183 residues: dCTP deaminase (183 aa).

Residues 97–102 and aspartate 113 each bind dCTP; that span reads RSSFAR. Catalysis depends on glutamate 123, which acts as the Proton donor/acceptor. DCTP contacts are provided by tyrosine 155 and glutamine 162.

The protein belongs to the dCTP deaminase family. Homotrimer.

It catalyses the reaction dCTP + H2O + H(+) = dUTP + NH4(+). The protein operates within pyrimidine metabolism; dUMP biosynthesis; dUMP from dCTP (dUTP route): step 1/2. Functionally, catalyzes the deamination of dCTP to dUTP. The sequence is that of dCTP deaminase from Sulfurisphaera tokodaii (strain DSM 16993 / JCM 10545 / NBRC 100140 / 7) (Sulfolobus tokodaii).